A 290-amino-acid chain; its full sequence is 4-hydroxybenzoate octaprenyltransferase (290 aa).

Transmembrane regions (helical) follow at residues I23–Y43, L46–I66, A96–I116, T118–Y138, L141–T161, C169–I189, I212–I232, L235–W255, and L265–L285.

This sequence belongs to the UbiA prenyltransferase family. It depends on Mg(2+) as a cofactor.

It localises to the cell inner membrane. It catalyses the reaction all-trans-octaprenyl diphosphate + 4-hydroxybenzoate = 4-hydroxy-3-(all-trans-octaprenyl)benzoate + diphosphate. It participates in cofactor biosynthesis; ubiquinone biosynthesis. In terms of biological role, catalyzes the prenylation of para-hydroxybenzoate (PHB) with an all-trans polyprenyl group. Mediates the second step in the final reaction sequence of ubiquinone-8 (UQ-8) biosynthesis, which is the condensation of the polyisoprenoid side chain with PHB, generating the first membrane-bound Q intermediate 3-octaprenyl-4-hydroxybenzoate. The polypeptide is 4-hydroxybenzoate octaprenyltransferase (Acinetobacter baylyi (strain ATCC 33305 / BD413 / ADP1)).